Consider the following 306-residue polypeptide: IN2-2 protein (306 aa).

Residue Tyr-64 is the Proton donor of the active site. His-131 provides a ligand contact to substrate. Residue Ser-210 to Gly-220 participates in NADP(+) binding. The disordered stretch occupies residues Leu-272–Gly-306. Over residues Pro-276 to Asn-289 the composition is skewed to basic residues.

Belongs to the aldo/keto reductase family. Aldo/keto reductase 2 subfamily. In terms of tissue distribution, leaves and roots.

The polypeptide is IN2-2 protein (IN2-2) (Zea mays (Maize)).